The chain runs to 66 residues: Large ribosomal subunit protein uL29 (66 aa).

Belongs to the universal ribosomal protein uL29 family.

The sequence is that of Large ribosomal subunit protein uL29 from Francisella tularensis subsp. tularensis (strain FSC 198).